Consider the following 205-residue polypeptide: Imidazoleglycerol-phosphate dehydratase (205 aa).

This sequence belongs to the imidazoleglycerol-phosphate dehydratase family.

The protein localises to the cytoplasm. It carries out the reaction D-erythro-1-(imidazol-4-yl)glycerol 3-phosphate = 3-(imidazol-4-yl)-2-oxopropyl phosphate + H2O. Its pathway is amino-acid biosynthesis; L-histidine biosynthesis; L-histidine from 5-phospho-alpha-D-ribose 1-diphosphate: step 6/9. This Chloroflexus aggregans (strain MD-66 / DSM 9485) protein is Imidazoleglycerol-phosphate dehydratase.